Consider the following 557-residue polypeptide: Dihydroxy-acid dehydratase 2 (557 aa).

Position 50 (Cys-50) interacts with [2Fe-2S] cluster. Asp-82 contributes to the Mg(2+) binding site. [2Fe-2S] cluster is bound at residue Cys-123. Residues Asp-124 and Lys-125 each contribute to the Mg(2+) site. At Lys-125 the chain carries N6-carboxylysine. Cys-195 contacts [2Fe-2S] cluster. Glu-447 is a Mg(2+) binding site. The active-site Proton acceptor is Ser-473.

This sequence belongs to the IlvD/Edd family. Homodimer. Requires [2Fe-2S] cluster as cofactor. It depends on Mg(2+) as a cofactor.

The catalysed reaction is (2R)-2,3-dihydroxy-3-methylbutanoate = 3-methyl-2-oxobutanoate + H2O. It carries out the reaction (2R,3R)-2,3-dihydroxy-3-methylpentanoate = (S)-3-methyl-2-oxopentanoate + H2O. Its pathway is amino-acid biosynthesis; L-isoleucine biosynthesis; L-isoleucine from 2-oxobutanoate: step 3/4. It functions in the pathway amino-acid biosynthesis; L-valine biosynthesis; L-valine from pyruvate: step 3/4. Functionally, functions in the biosynthesis of branched-chain amino acids. Catalyzes the dehydration of (2R,3R)-2,3-dihydroxy-3-methylpentanoate (2,3-dihydroxy-3-methylvalerate) into 2-oxo-3-methylpentanoate (2-oxo-3-methylvalerate) and of (2R)-2,3-dihydroxy-3-methylbutanoate (2,3-dihydroxyisovalerate) into 2-oxo-3-methylbutanoate (2-oxoisovalerate), the penultimate precursor to L-isoleucine and L-valine, respectively. This chain is Dihydroxy-acid dehydratase 2, found in Burkholderia lata (strain ATCC 17760 / DSM 23089 / LMG 22485 / NCIMB 9086 / R18194 / 383).